The following is a 524-amino-acid chain: 3-epi-6-deoxocathasterone 23-monooxygenase CYP90C1 (524 aa).

Residues 25–45 (YLVAGFLVLTAGILLRPWLWL) traverse the membrane as a helical segment. Cys-463 is a binding site for heme.

It belongs to the cytochrome P450 family. Heme serves as cofactor. In terms of tissue distribution, widely expressed.

The protein localises to the endoplasmic reticulum membrane. The catalysed reaction is 3-epi-6-deoxocathasterone + reduced [NADPH--hemoprotein reductase] + O2 = 6-deoxotyphasterol + oxidized [NADPH--hemoprotein reductase] + H2O + H(+). It carries out the reaction (22S,24R)-22-hydroxy-5alpha-ergostan-3-one + reduced [NADPH--hemoprotein reductase] + O2 = 3-dehydro-6-deoxoteasterone + oxidized [NADPH--hemoprotein reductase] + H2O + H(+). The protein operates within plant hormone biosynthesis; brassinosteroid biosynthesis. Functionally, involved in brassinosteroid (BR) biosynthesis. Converts typhasterol (TY) to cathasterone (CS) and 6-deoxotyphasterol (6-deoxoTY) to 6-deoxocathasterone (6-deoxoCT). C-23 hydroxylase that converts directly (22S,24R)-22-hydroxy-5-alpha-ergostan-3-one and 3-epi-6-deoxocathasterone to 3-dehydro-6-deoxoteasterone (6-deoxo3DT, 6-deoxo3DHT) and 6-deoxotyphasterol (6-deoxoTY), respectively. These C-23 hydroxylation shortcuts bypass campestanol, 6-deoxocathasterone, and 6-deoxoteasterone (6-deoxoTE). Also catalyzes the conversion of cathasterone to teasterone (TE), (22S,24R)-22-hydroxyergost-4-en-3-one (22-OH-4-en-3-one) to (22R,23R)-22,23-dihydroxy-campest-4-en-3-one (22,23-diOH-4-en-3-one) and (22S)-22-hydroxycampesterol (22-OHCR) to (22R,23R)-22,23-dihydroxycampesterol (22,23-diOHCR). Required for the regulation of polar elongation of leaf cells. Required for the longitudinal elongation of floral organs. The protein is 3-epi-6-deoxocathasterone 23-monooxygenase CYP90C1 of Arabidopsis thaliana (Mouse-ear cress).